The primary structure comprises 133 residues: Fatty acid-binding protein, heart (133 aa).

Val2 carries the post-translational modification N-acetylvaline. Thr8 bears the Phosphothreonine mark. Position 20 is a phosphotyrosine; by Tyr-kinases (Tyr20). At Ser23 the chain carries Phosphoserine. A Phosphothreonine modification is found at Thr30. At Ser83 the chain carries Phosphoserine. 127–129 lines the (9Z)-octadecenoate pocket; that stretch reads RTY. 127 to 129 is a hexadecanoate binding site; sequence RTY. 127–129 is an octadecanoate binding site; it reads RTY.

This sequence belongs to the calycin superfamily. Fatty-acid binding protein (FABP) family.

The protein localises to the cytoplasm. Functionally, FABPs are thought to play a role in the intracellular transport of long-chain fatty acids and their acyl-CoA esters. This chain is Fatty acid-binding protein, heart (FABP3), found in Homo sapiens (Human).